Reading from the N-terminus, the 246-residue chain is Dihydromethanopterin reductase (acceptor) (246 aa).

4Fe-4S ferredoxin-type domains follow at residues 150 to 178 (LPYA…VKRD) and 179 to 208 (NFVE…EGKE). [4Fe-4S] cluster is bound by residues Cys159, Cys162, Cys165, Cys169, Cys188, Cys191, Cys194, and Cys198.

In terms of assembly, homodimer. The cofactor is [4Fe-4S] cluster.

It catalyses the reaction 5,6,7,8-tetrahydromethanopterin + A = 7,8-dihydromethanopterin + AH2. It participates in cofactor biosynthesis; 5,6,7,8-tetrahydromethanopterin biosynthesis. Its function is as follows. Involved in the biosynthesis of tetrahydromethanopterin, a coenzyme used in methanogenesis. Catalyzes the reduction of dihydromethanopterin (H(2)MPT) to tetrahydromethanopterin (H(4)MPT). Ferredoxin may serve as an electron donor. The protein is Dihydromethanopterin reductase (acceptor) of Methanocaldococcus jannaschii (strain ATCC 43067 / DSM 2661 / JAL-1 / JCM 10045 / NBRC 100440) (Methanococcus jannaschii).